The chain runs to 339 residues: DNA-directed RNA polymerase subunit alpha (339 aa).

The segment at 1-233 (MVREEVAGST…DLFLPFLHAE (233 aa)) is alpha N-terminal domain (alpha-NTD). The interval 266 to 339 (GIPLNCIFID…IDLLKNKLSF (74 aa)) is alpha C-terminal domain (alpha-CTD).

Belongs to the RNA polymerase alpha chain family. In terms of assembly, in plastids the minimal PEP RNA polymerase catalytic core is composed of four subunits: alpha, beta, beta', and beta''. When a (nuclear-encoded) sigma factor is associated with the core the holoenzyme is formed, which can initiate transcription.

The protein resides in the plastid. It localises to the chloroplast. The catalysed reaction is RNA(n) + a ribonucleoside 5'-triphosphate = RNA(n+1) + diphosphate. Functionally, DNA-dependent RNA polymerase catalyzes the transcription of DNA into RNA using the four ribonucleoside triphosphates as substrates. In Aegilops speltoides (Goatgrass), this protein is DNA-directed RNA polymerase subunit alpha.